The following is a 903-amino-acid chain: MASVWQRLGFYASLLKRQLNGGPDVIKWERRVIPGCTRSIYSATGKWTKEYTLQTRKDVEKWWHQRIKEQASKISEADKSKPKFYVLSMFPYPSGKLHMGHVRVYTISDTIARFQKMRGMQVINPMGWDAFGLPAENAAVERNLHPESWTQSNIKHMRKQLDRLGLCFSWDREITTCLPDYYKWTQYLFIKLYEAGLAYQKEALVNWDPVDQTVLANEQVDEHGCSWRSGAKVEQKYLRQWFIKTTAYAKAMQDALADLPEWYGIKGMQAHWIGDCVGCHLDFTLKVHGQATGEKLTAYTATPEAIYGTSHVAISPSHRLLHGHSSLKEALRMALVPGKDCLTPVMAVNMLTQQEVPVVILAKADLEGSLDSKIGIPSTSSEDTILAQTLGLAYSEVIETLPDGTERLSSSAEFTGMTRQDAFLALTQKARGKRVGGDVTSDKLKDWLISRQRYWGTPIPIVHCPVCGPTPVPLEDLPVTLPNIASFTGKGGSPLAMASEWVNCSCPRCKGAAKRETDTMDTFVDSAWYYFRYTDPHNPHSPFNTAVADYWMPVDLYIGGKEHAVMHLFYARFFSHFCHDQKMVKHREPFHKLLAQGLIKGQTFRLPSGQYLQREEVDLTGSVPVHAKTKEKLEVTWEKMSKSKHNGVDPEEVVEQYGIDTIRLYILFAAPPEKDILWDVKTDALPGVLRWQQRLWTLTTRFIEARASGKSPQPQLLSNKEKAEARKLWEYKNSVISQVTTHFTEDFSLNSAISQLMGLSGALSQASQSVILHSPEFEDALCALMVMAAPMAPHVTSEIWAGLALVPRKLCAHYTWDVSVLLQAWPAVDPEFLQEPEVVQMAVLINNKACGKIPVPQQVARDQDKVHEFVLQSELGVRLLQGRSIKKSFLSPRTALINFPVQD.

Position 68 is an N6-acetyllysine (K68). The 'HIGH' region motif lies at 92-102 (YPSGKLHMGHV). At K236 the chain carries N6-acetyllysine. A 'KMSKS' region motif is present at residues 639–643 (KMSKS). K642 contributes to the ATP binding site. S711 bears the Phosphoserine mark.

The protein belongs to the class-I aminoacyl-tRNA synthetase family.

The protein localises to the mitochondrion matrix. The catalysed reaction is tRNA(Leu) + L-leucine + ATP = L-leucyl-tRNA(Leu) + AMP + diphosphate. This chain is Probable leucine--tRNA ligase, mitochondrial (LARS2), found in Pongo abelii (Sumatran orangutan).